Here is a 596-residue protein sequence, read N- to C-terminus: MKRKSRFWPILLGFTVLVAAGLYYVVRMFSVDLPDYPKVDKVTWLEQNWSQSQRGWMHHADQGTVTFSMPYEWLAALEQPTFTLTAGPPFLSSDYLDRFGFITADSSGLPVGFAHGGDLVDPKTAQPWVNPATGKPLTTVGLTCAACHTGRFTYKGTAVMVDGGPALTDLGKFRKASGLALFFTRYAPFRFDRFATAVLGPQADEKARAVLKKQLDKVLAGGRIEVDLDKKVAEKSIEEGFGRLDALNRIGNQVFSLDLERPENYVAQSAPVAFPHIWDTSWFDWVQYNASIMQPMVRNAGEALGVRAFINLTKSEQPLFASTVKVDTIFEIEQQLAGKQPTAENGFTGLRPPRWPSNLFGSIDTKLATEGAAVYADRCQGCHLPPVGSEGFWEQKHWTNENSAGERYLRVPIINVENIGTDPAQAQSMAERKVKLPSELGIDTDSFGSALGALVAKTAARWYDNQTPPVPAEQREIMNGNRQNGIQAPLAYKARPLDGIWATPPFLHNGSVPTIDALLSPAGERPKTFWLGNREYDPDKLGYLTDELKGGFKFDTAKPGNSNAGHEFSDTPGPGVIGPALKPDEKAALIAYLKTL.

Residues Phe7 to Val26 form a helical membrane-spanning segment.

It localises to the membrane. This is an uncharacterized protein from Sinorhizobium fredii (strain NBRC 101917 / NGR234).